The chain runs to 155 residues: Small ribosomal subunit protein uS7c (155 aa).

This sequence belongs to the universal ribosomal protein uS7 family. Part of the 30S ribosomal subunit.

Its subcellular location is the plastid. It is found in the chloroplast. Its function is as follows. One of the primary rRNA binding proteins, it binds directly to 16S rRNA where it nucleates assembly of the head domain of the 30S subunit. The protein is Small ribosomal subunit protein uS7c (rps7) of Spathiphyllum wallisii (Peace lily).